Reading from the N-terminus, the 255-residue chain is Ribonuclease HII (255 aa).

The region spanning 72–255 is the RNase H type-2 domain; sequence AIICGIDEVG…KSFEPIKSLL (184 aa). Positions 78, 79, and 170 each coordinate a divalent metal cation.

The protein belongs to the RNase HII family. The cofactor is Mn(2+). It depends on Mg(2+) as a cofactor.

It is found in the cytoplasm. The enzyme catalyses Endonucleolytic cleavage to 5'-phosphomonoester.. Its function is as follows. Endonuclease that specifically degrades the RNA of RNA-DNA hybrids. This is Ribonuclease HII from Staphylococcus aureus (strain bovine RF122 / ET3-1).